A 186-amino-acid polypeptide reads, in one-letter code: MGRYSRESDNVTKSCKARGPNLRVHFKNTHETAQAIKRMPLRRAQRFLKAVIDQKECVPFRRFNGGVGRCAQAKQWKTTQGRWPKKSAEFLLQLLRNAEANADCKGLDADRMVVHHIQVNRAQCLRRRTYRAHGRINPYMSSPCHVEVILTEKEEVVSKAVDDEPAKKKLSKKKLQRQKEKMLRSE.

Residues V161–E186 form a disordered region. A compositionally biased stretch (basic and acidic residues) spans R177–E186.

It belongs to the universal ribosomal protein uL22 family.

The chain is Large ribosomal subunit protein uL22 (RpL17) from Drosophila pseudoobscura pseudoobscura (Fruit fly).